The primary structure comprises 714 residues: MDGDRTPEEQIEIAESDQGPQLDDNVELANVFSYSLDQRIMEGCVISAILEPRGLETIVAVSVTNKIIIKDKETSLNITETIRCIAAAPFGDGYDCIIIGTDSSVICYDVHNNLTVFRNDVPDGVSCFVYGKLGELDEAIYCGGNCCIWGFDKTGANTYWTVTGDQVTTMCLSDYDNDGETELVIGSPDFEIRVFKNDLMRTELMETDEITCLAHVANGCFAYSLNNGTIGTYVLKERQWRIKSKSNVSKIFNFEEEGLMVVVWKQGKVDLRFAHNGEVLSRDSVSSHVASASVSKKGDESFITVVCLDGKVKGFKIQRAQNGSIDKTQQLIREFGQKKHNLMMELSNYEQEEQLADVEKDRDFRIPVDTEVAVVFVVNTELQLLSLRVEASHNIPIRGVLIFAEGLFEGESYIWIPPNEYQSRSVIDIPLVIDKDSTNDLHTKVFLGQVDSNKLMVMENTRILPKFCRFTLLREEYSKFFYMPTAYIQFDINSRAAKLSEWVQESFTIDASLVEMFDEPEGEFKFMGLRPKHEKSLMFKISHSEKTCKIYHDKIETMGAIVQSYASFYQIQNMESVAHFPDVFKEADEILEEIDPMTEVRDRLTAELQERQAAVKEIIIRAEDSIAIDNIPDARKFYIRLKANDAAARQAAQLRWNNQERCVKSLRRLNKIIENCSRLRVGEPGRQIVVSCRSAIADDNKQIITKILQYGASV.

Coiled coils occupy residues 332-361 (IREFGQKKHNLMMELSNYEQEEQLADVEKD) and 597-627 (MTEVRDRLTAELQERQAAVKEIIIRAEDSIA).

As to quaternary structure, part of BBSome complex, that contains at least bbs-1, bbs-2, bbs-4, bbs-5, osm-12, bbs-8/ttc-8 and bbs-9. In terms of tissue distribution, expressed in ciliated cells including amphid and both inner and outer labial neurons of the head and in both phasmid neurons PHA and PHB in the tail at larval stages L1 and L2.

The protein localises to the cell projection. Its subcellular location is the cilium. The protein resides in the cytoplasm. It is found in the cytoskeleton. It localises to the cilium basal body. The protein localises to the cilium axoneme. In terms of biological role, component of the BBSome complex. The BBSome complex is thought to function as a coat complex required for sorting of specific membrane proteins to the primary cilia. The BBSome complex is required for ciliogenesis but is dispensable for centriolar satellite function. Required for proper BBSome complex assembly and its ciliary localization. Required for cilia biogenesis and both the assembly and movement of intraflagellar transport proteins along the ciliary axoneme. The protein is BBSome complex member bbs-2 of Caenorhabditis elegans.